Here is a 541-residue protein sequence, read N- to C-terminus: Chaperonin GroEL (541 aa).

ATP contacts are provided by residues 29-32 (TLGP), 86-90 (DGTTT), glycine 413, 476-478 (NAA), and aspartate 492. The interval 521–541 (KPEDNPAPAAPAANPGMGGMM) is disordered. Over residues 526–535 (PAPAAPAANP) the composition is skewed to low complexity.

The protein belongs to the chaperonin (HSP60) family. As to quaternary structure, forms a cylinder of 14 subunits composed of two heptameric rings stacked back-to-back. Interacts with the co-chaperonin GroES.

It localises to the cytoplasm. It carries out the reaction ATP + H2O + a folded polypeptide = ADP + phosphate + an unfolded polypeptide.. Functionally, together with its co-chaperonin GroES, plays an essential role in assisting protein folding. The GroEL-GroES system forms a nano-cage that allows encapsulation of the non-native substrate proteins and provides a physical environment optimized to promote and accelerate protein folding. This Levilactobacillus brevis (strain ATCC 367 / BCRC 12310 / CIP 105137 / JCM 1170 / LMG 11437 / NCIMB 947 / NCTC 947) (Lactobacillus brevis) protein is Chaperonin GroEL.